The chain runs to 676 residues: Envelope glycoprotein (676 aa).

The N-terminal stretch at Met1 to Ser34 is a signal peptide. The interval Ala35–Pro270 is receptor-binding domain (RBD). Topologically, residues Ala35–Leu620 are extracellular. Residue Asn46 is glycosylated (N-linked (GlcNAc...) asparagine; by host). 5 cysteine pairs are disulfide-bonded: Cys80–Cys132, Cys106–Cys121, Cys107–Cys117, Cys155–Cys175, and Cys167–Cys180. A Zn(2+)-binding site is contributed by His89. A Zn(2+)-binding site is contributed by Asp120. An N-linked (GlcNAc...) asparagine; by host glycan is attached at Asn202. Cys212 and Cys218 form a disulfide bridge. Positions Asn287 to Gly321 are disordered. Low complexity predominate over residues Pro296 to Pro308. The span at Ser309–Ala318 shows a compositional bias: pro residues. Asn336 carries an N-linked (GlcNAc...) asparagine; by host glycan. 6 disulfide bridges follow: Cys346/Cys349, Cys346/Cys573, Cys376/Cys430, Cys395/Cys407, Cys437/Cys450, and Cys565/Cys572. The CXXC signature appears at Cys346–Cys349. Asn368 and Asn375 each carry an N-linked (GlcNAc...) asparagine; by host glycan. N-linked (GlcNAc...) asparagine; by host glycosylation is found at Asn408 and Asn444. A fusion peptide region spans residues Val482–Val502. Positions Gln513 to Val547 form a coiled coil. Residues Leu548 to Leu564 are immunosuppression. The CX6CC motif lies at Cys565–Cys573. The chain crosses the membrane as a helical span at residues Ile621–Ile641. A lipid anchor (S-palmitoyl cysteine; by host) is attached at Cys640. Residues Leu642–Gln676 lie on the Cytoplasmic side of the membrane. Residues Tyr665 to Leu668 carry the YXXL motif; contains endocytosis signal motif.

The mature envelope protein (Env) consists of a trimer of SU-TM heterodimers attached by a labile interchain disulfide bond. In terms of processing, specific enzymatic cleavages in vivo yield mature proteins. Envelope glycoproteins are synthesized as an inactive precursor that is N-glycosylated and processed likely by host cell furin or by a furin-like protease in the Golgi to yield the mature SU and TM proteins. The cleavage site between SU and TM requires the minimal sequence [KR]-X-[KR]-R. The R-peptide is released from the C-terminus of the cytoplasmic tail of the TM protein upon particle formation as a result of proteolytic cleavage by the viral protease. Cleavage of this peptide is required for TM to become fusogenic. Post-translationally, the CXXC motif is highly conserved across a broad range of retroviral envelope proteins. It is thought to participate in the formation of a labile disulfide bond possibly with the CX6CC motif present in the transmembrane protein. Isomerization of the intersubunit disulfide bond to an SU intrachain disulfide bond is thought to occur upon receptor recognition in order to allow membrane fusion. The transmembrane protein is palmitoylated. In terms of processing, the R-peptide is palmitoylated.

The protein localises to the virion membrane. It localises to the host cell membrane. In terms of biological role, the surface protein (SU) attaches the virus to the host cell by binding to its receptor. This interaction triggers the refolding of the transmembrane protein (TM) and is thought to activate its fusogenic potential by unmasking its fusion peptide. Fusion occurs at the host cell plasma membrane. The transmembrane protein (TM) acts as a class I viral fusion protein. Under the current model, the protein has at least 3 conformational states: pre-fusion native state, pre-hairpin intermediate state, and post-fusion hairpin state. During viral and target cell membrane fusion, the coiled coil regions (heptad repeats) assume a trimer-of-hairpins structure, positioning the fusion peptide in close proximity to the C-terminal region of the ectodomain. The formation of this structure appears to drive apposition and subsequent fusion of viral and target cell membranes. Membranes fusion leads to delivery of the nucleocapsid into the cytoplasm. This is Envelope glycoprotein (env) from Friend murine leukemia virus (isolate FB29) (FrMLV).